The chain runs to 395 residues: Levanbiose-producing levanase (395 aa).

Residue aspartate 1 is part of the active site. Substrate-binding positions include 59–60 (WT), 124–125 (RD), glutamate 173, and tryptophan 261.

Belongs to the glycosyl hydrolase 32 family.

The protein localises to the membrane. It catalyses the reaction Hydrolysis of (2-&gt;6)-beta-D-fructofuranan, to remove successive disaccharide residues as levanbiose, i.e. 6-(beta-D-fructofuranosyl)-D-fructose, from the end of the chain.. Catalyzes the degradation of levan mainly into levanbiose (difructose). Can also hydrolyze inulin. In Geobacillus stearothermophilus (Bacillus stearothermophilus), this protein is Levanbiose-producing levanase (levB).